Reading from the N-terminus, the 508-residue chain is Amphoterin-induced protein 3 (508 aa).

The N-terminal stretch at 1–19 (MAWLVLSGILLCMLGAGLG) is a signal peptide. The Extracellular segment spans residues 20-383 (TSDLEDVLPP…ARPEPETFNT (364 aa)). Positions 25–61 (DVLPPAPHNCPDICICAADVLSCAGRGLQDLPVALPT) constitute an LRRNT domain. 2 disulfides stabilise this stretch: Cys34-Cys40 and Cys38-Cys47. 6 LRR repeats span residues 62–83 (TAAE…WLAP), 86–107 (RLRA…AFTN), 110–133 (GLRT…DGLE), 134–155 (ELEK…AFQG), 158–178 (MLSH…NHLH), and 184–207 (RLRT…AALP). Asn107 carries N-linked (GlcNAc...) asparagine glycosylation. Asn142 is a glycosylation site (N-linked (GlcNAc...) asparagine). Residues 219 to 275 (NPLPCDCSLYHLLRRWHQRGLSALHDFEREYTCLVFKVSESRVRFFEHSRVFKNCSV) enclose the LRRCT domain. Cystine bridges form between Cys223/Cys251, Cys225/Cys273, and Cys300/Cys352. N-linked (GlcNAc...) asparagine glycans are attached at residues Asn272, Asn301, Asn362, and Asn368. Residues 279-370 (PGLELPEEQL…HNQTLEYNVS (92 aa)) form the Ig-like C2-type domain. A helical membrane pass occupies residues 384–404 (GFTTLLGCIVGLVLVLLYLFA). At 405–508 (PPCRGCCHCC…STGSEGLVMS (104 aa)) the chain is on the cytoplasmic side.

The protein belongs to the immunoglobulin superfamily. AMIGO family. In terms of assembly, binds AMIGO1 or AMIGO2. Ubiquitous.

The protein resides in the membrane. Its function is as follows. May mediate heterophilic cell-cell interaction. May contribute to signal transduction through its intracellular domain. The chain is Amphoterin-induced protein 3 from Mus musculus (Mouse).